Reading from the N-terminus, the 539-residue chain is MGVVAKNFPIPDLHRVRRILLSVSDKTGVVAFAQALHATYSVELISTGGTAKTLIAAGLPVKDVSEVTGFPEIMDGRVKTLHPLIHGALLGIREDPSHREAMEKNSIHGIDLLVVNLYPFEETIQSGADGKTILENIDIGGPAMIRAAAKNYAYTGVVTAINDYDSILAELKQHNGCLSLSMRHQLAMRAYAHTAAYDTAIAAWFARDLKIETPSWQSFSGHLESVMRYGENPHQQAAFYRNNEKRFGVATAKLLQGKALSYNNLNDTDAAFELVAEFDPQKTAAVALIKHANPCGVAEGENLKDAYLKALMCDNVSAFGGIVALNQTLDEECAEEIVKIFTEVIIAPDATMAAREIIAKKKNLRLLITGGIPNPRCGGLLAKTLAGGILVQSRDNVVIDDLKLQVVTKRTPTQDEMRDLQFAFRVAKHVKSNAIVYAKNSATVGIGAGQMSRIDSAKIAASKAAESARRAGLTETLTKGSVVASDAFFPFADGLLAAAAAGATAVIQPGGSMRDEEVITAADEQGLAMVFTGIRHFRH.

The MGS-like domain occupies 8 to 159; it reads FPIPDLHRVR…KNYAYTGVVT (152 aa).

It belongs to the PurH family.

It carries out the reaction (6R)-10-formyltetrahydrofolate + 5-amino-1-(5-phospho-beta-D-ribosyl)imidazole-4-carboxamide = 5-formamido-1-(5-phospho-D-ribosyl)imidazole-4-carboxamide + (6S)-5,6,7,8-tetrahydrofolate. The catalysed reaction is IMP + H2O = 5-formamido-1-(5-phospho-D-ribosyl)imidazole-4-carboxamide. Its pathway is purine metabolism; IMP biosynthesis via de novo pathway; 5-formamido-1-(5-phospho-D-ribosyl)imidazole-4-carboxamide from 5-amino-1-(5-phospho-D-ribosyl)imidazole-4-carboxamide (10-formyl THF route): step 1/1. It participates in purine metabolism; IMP biosynthesis via de novo pathway; IMP from 5-formamido-1-(5-phospho-D-ribosyl)imidazole-4-carboxamide: step 1/1. The polypeptide is Bifunctional purine biosynthesis protein PurH (Bartonella tribocorum (strain CIP 105476 / IBS 506)).